A 492-amino-acid chain; its full sequence is Probable ATP-citrate synthase subunit 2 (492 aa).

S24 is modified (phosphoserine).

This sequence in the N-terminal section; belongs to the succinate/malate CoA ligase beta subunit family. The protein in the C-terminal section; belongs to the succinate/malate CoA ligase alpha subunit family. In terms of assembly, composed of two subunits.

Its subcellular location is the cytoplasm. The protein localises to the nucleus. It carries out the reaction oxaloacetate + acetyl-CoA + ADP + phosphate = citrate + ATP + CoA. ATP citrate-lyase is the primary enzyme responsible for the synthesis of cytosolic acetyl-CoA. Has a central role in de novo lipid synthesis. The chain is Probable ATP-citrate synthase subunit 2 from Schizosaccharomyces pombe (strain 972 / ATCC 24843) (Fission yeast).